The following is a 355-amino-acid chain: Isocitrate dehydrogenase [NAD] subunit gamma, mitochondrial (355 aa).

Ile1 is a transit peptide (mitochondrion). The citrate site is built by Thr82 and Asn95. The substrate site is built by Arg98, Arg129, and Asp216. Position 216 (Asp216) interacts with Mn(2+). Positions 274, 275, and 286 each coordinate ADP.

Belongs to the isocitrate and isopropylmalate dehydrogenases family. Heterooligomer of subunits alpha (IDH3A), beta (IDH3B), and gamma (IDH3G) in the apparent ratio of 2:1:1. The heterodimer containing one IDH3A and one IDH3B subunit and the heterodimer containing one IDH3A and one IDH3G subunit assemble into a heterotetramer (which contains two subunits of IDH3A, one of IDH3B and one of IDH3G) and further into the heterooctamer. It depends on Mg(2+) as a cofactor. Mn(2+) is required as a cofactor.

The protein localises to the mitochondrion. Its activity is regulated as follows. The heterotetramer and the heterodimer composed of IDH3A and IDH3G subunits can be allosterically activated by citrate (CIT) or/and ADP, and the two activators can act independently or synergistically. The heterodimer composed of IDH3A and IDH3B subunits cannot be allosterically regulated and the allosteric regulation of the heterotetramer is through the IDH3G subunit and not the IDH3B subunit. The IDH3G subunit contains the allosteric site which consists of a CIT-binding site and an ADP-binding site, and the binding of CIT and ADP causes conformational changes at the allosteric site which are transmitted to the active site in the catalytic subunit (IDH3A) through a cascade of conformational changes at the heterodimer interface, leading to stabilization of the isocitrate-binding at the active site and thus activation of the enzyme. ATP can activate the heterotetramer and the heterodimer composed of IDH3A and IDH3G subunits at low concentrations but inhibits their activities at high concentrations, whereas ATP exhibits only inhibitory effect on the heterodimer composed of IDH3A and IDH3B subunits. In terms of biological role, regulatory subunit which plays a role in the allosteric regulation of the enzyme catalyzing the decarboxylation of isocitrate (ICT) into alpha-ketoglutarate. The heterodimer composed of the alpha (IDH3A) and beta (IDH3B) subunits and the heterodimer composed of the alpha (IDH3A) and gamma (IDH3G) subunits, have considerable basal activity but the full activity of the heterotetramer (containing two subunits of IDH3A, one of IDH3B and one of IDH3G) requires the assembly and cooperative function of both heterodimers. The protein is Isocitrate dehydrogenase [NAD] subunit gamma, mitochondrial (IDH3G) of Macaca fascicularis (Crab-eating macaque).